Here is a 310-residue protein sequence, read N- to C-terminus: Cytosolic Fe-S cluster assembly factor Nubp1 homolog (310 aa).

Positions 8, 22, 25, and 31 each coordinate [4Fe-4S] cluster. 62–69 (GKGGVGKS) contacts ATP. 2 residues coordinate [4Fe-4S] cluster: C239 and C242.

It belongs to the Mrp/NBP35 ATP-binding proteins family. NUBP1/NBP35 subfamily. As to quaternary structure, heterotetramer of 2 Nubp1 and 2 Nubp2 chains. [4Fe-4S] cluster is required as a cofactor.

It is found in the cytoplasm. Component of the cytosolic iron-sulfur (Fe/S) protein assembly (CIA) machinery. Required for maturation of extramitochondrial Fe-S proteins. The Nubp1-Nubp2 heterotetramer forms a Fe-S scaffold complex, mediating the de novo assembly of an Fe-S cluster and its transfer to target apoproteins. The sequence is that of Cytosolic Fe-S cluster assembly factor Nubp1 homolog from Drosophila willistoni (Fruit fly).